A 261-amino-acid chain; its full sequence is Small ribosomal subunit protein eS1 (261 aa).

Positions 1-18 (MAVGKNKRISKGKKGGKK) are enriched in basic residues. Residues 1-20 (MAVGKNKRISKGKKGGKKKA) form a disordered region.

Belongs to the eukaryotic ribosomal protein eS1 family. Component of the small ribosomal subunit. Mature ribosomes consist of a small (40S) and a large (60S) subunit. The 40S subunit contains about 33 different proteins and 1 molecule of RNA (18S). The 60S subunit contains about 49 different proteins and 3 molecules of RNA (25S, 5.8S and 5S).

It localises to the cytoplasm. The chain is Small ribosomal subunit protein eS1 from Catharanthus roseus (Madagascar periwinkle).